Consider the following 179-residue polypeptide: Ribosome-recycling factor (179 aa).

Belongs to the RRF family.

It is found in the cytoplasm. In terms of biological role, responsible for the release of ribosomes from messenger RNA at the termination of protein biosynthesis. May increase the efficiency of translation by recycling ribosomes from one round of translation to another. The sequence is that of Ribosome-recycling factor from Chlamydia trachomatis serovar A (strain ATCC VR-571B / DSM 19440 / HAR-13).